A 291-amino-acid chain; its full sequence is Pre-mRNA-splicing factor SPP381 (291 aa).

Disordered stretches follow at residues 1 to 99 (MSFR…PLPR) and 239 to 266 (EKEK…YKIT). Polar residues-rich tracts occupy residues 28-41 (QNVS…SLSH) and 52-62 (TGKNRTPNDGQ). Positions 63-91 (ESNESDGSPESDESPESEESSDNSDSSDS) are enriched in acidic residues. A compositionally biased stretch (basic and acidic residues) spans 239–258 (EKEKLDHKKQRSAEKVEKSH).

This sequence belongs to the SPP381 family. In terms of assembly, component of the U4/U6-U5 tri-snRNP complex composed of the U4, U6 and U5 snRNAs and at least PRP3, PRP4, PRP6, PRP8, PRP18, PRP31, PRP38, SNU13, SNU23, SNU66, SNU114, SPP381, SMB1, SMD1, SMD2, SMD3, SMX2, SMX3, LSM2, LSM3, LSM4, LSM5, LSM6, LSM7, LSM8, BRR2 and DIB1. Interacts with PRP38.

It localises to the nucleus. Component of the spliceosome and rRNA processing machinery. In association with the spliceosomal U4/U6.U5 tri-snRNP particle, required for splicing of pre-mRNA. This Saccharomyces cerevisiae (strain ATCC 204508 / S288c) (Baker's yeast) protein is Pre-mRNA-splicing factor SPP381 (SPP381).